The primary structure comprises 451 residues: Epi-neemfruitin B 7-O-acetyltransferse L7AT (451 aa).

Active-site proton acceptor residues include His-165 and Asp-384.

This sequence belongs to the plant acyltransferase family. Monomer. In terms of tissue distribution, mainly expressed in petioles and, to a lower extent, in roots.

It carries out the reaction epi-neemfruitin B + acetyl-CoA = 7-acetyl-epi-neemfruitin B + CoA. It participates in secondary metabolite biosynthesis; terpenoid biosynthesis. Functionally, acetyltransferase involved in the biosynthesis of limonoids triterpene natural products such as azadirachtin, an antifeedant widely used as bioinsecticide, and possessing many medicinal applications including anti-tumoral, anti-malarial, anti-rheumatic, antibacterial, anti-inflammatory, anti-pyretic and diuretic effects. Catalyzes the formation of 7-acetyl-epi-neemfruitin B from epi-neemfruitin B. This Melia azedarach (Chinaberry tree) protein is Epi-neemfruitin B 7-O-acetyltransferse L7AT.